The sequence spans 323 residues: Transcription factor JunD (323 aa).

Disordered regions lie at residues 138–173 (QNQL…APGL) and 197–221 (PFAA…QIVP). Over residues 141-167 (LGGGGGPNGGAAAAGGGGGGGGGGGGE) the composition is skewed to gly residues. The segment covering 198 to 212 (FAAPPPRLPPPPPPP) has biased composition (pro residues). Positions 242 to 269 (RIKAERKRLRNRIAASKCRKRKLERISR) are basic motif. Residues 242-305 (RIKAERKRLR…AQLKQKVLSH (64 aa)) enclose the bZIP domain. The tract at residues 270-298 (LEEKVKSLKSQNTELASTASLLREQVAQL) is leucine-zipper.

The protein belongs to the bZIP family. Jun subfamily. Binds DNA as a dimer.

The protein localises to the nucleus. This is Transcription factor JunD (JUND) from Gallus gallus (Chicken).